A 153-amino-acid chain; its full sequence is MVVKAVCVINGDVKGTVHFEQQDAKSPVLVTGEVNGLAKGLHGFHVHEFGDNTNGCTSAGPHFNPYGNSHGAPSDLNRHLGDLGNIEASGDGATKVEISDKLITLFGENSIVGRTIVVHADPDDLGKGGHELSKTTGNAGARLGCGVIGICKI.

Cu cation-binding residues include histidine 45, histidine 47, and histidine 62. Cysteine 56 and cysteine 145 are disulfide-bonded. Positions 62, 70, 79, and 82 each coordinate Zn(2+). Histidine 119 is a Cu cation binding site.

Belongs to the Cu-Zn superoxide dismutase family. Homodimer. Requires Cu cation as cofactor. Zn(2+) is required as a cofactor.

It localises to the cytoplasm. The catalysed reaction is 2 superoxide + 2 H(+) = H2O2 + O2. Functionally, destroys radicals which are normally produced within the cells and which are toxic to biological systems. The sequence is that of Superoxide dismutase [Cu-Zn] from Ceratitis capitata (Mediterranean fruit fly).